The following is a 580-amino-acid chain: Small conductance calcium-activated potassium channel protein 2 (580 aa).

Disordered stretches follow at residues 1–68 (MSSC…VSKP) and 88–116 (GGGG…KKNQ). Positions 48 to 61 (SSPSAAAAASSSAP) are enriched in low complexity. Residues 88-104 (GGGGGGGGGGGGSGHGS) are compositionally biased toward gly residues. The chain crosses the membrane as a helical span at residues 140–160 (LIFGMFGIVVMVIETELSWGA). Tyr-161 is modified (phosphotyrosine). Residues 169–189 (LALKCLISLSTIILLGLIIVY) traverse the membrane as a helical segment. A helical membrane pass occupies residues 215–235 (IFFICLEILVCAIHPIPGNYT). A helical membrane pass occupies residues 257 to 277 (IILSIPMFLRLYLIARVMLLH). The chain crosses the membrane as a helical span at residues 306–326 (LMTICPGTVLLVFSISLWIIA). The segment at residues 346-366 (FLGAMWLISITFLSIGYGDMV) is an intramembrane region (pore-forming). The chain crosses the membrane as a helical span at residues 375 to 395 (VCLLTGIMGAGCTALVVAVVA). The tract at residues 413–489 (DTQLTKRVKN…LVDLAKTQNI (77 aa)) is calmodulin-binding. Over residues 551–560 (HVTYNAERSR) the composition is skewed to basic and acidic residues. A disordered region spans residues 551–580 (HVTYNAERSRSSSRRRRSSSTAPPTSSESS). The segment covering 569–580 (SSTAPPTSSESS) has biased composition (low complexity).

This sequence belongs to the potassium channel KCNN family. KCa2.2/KCNN2 subfamily. Homodimer. Heteromultimer with KCNN1 and KCNN3. The complex is composed of 4 channel subunits each of which binds to a calmodulin subunit which regulates the channel activity through calcium-binding. Interacts (via N-terminal domain) with MPP2. Brain.

It is found in the membrane. It localises to the cytoplasm. The protein localises to the myofibril. Its subcellular location is the sarcomere. The protein resides in the z line. The catalysed reaction is K(+)(in) = K(+)(out). Its activity is regulated as follows. Inhibited by bee venom neurotoxin apamin. Inhibited by UCL 1684 and tetraethylammonium (TEA). In terms of biological role, small conductance calcium-activated potassium channel that mediates the voltage-independent transmembrane transfer of potassium across the cell membrane through a constitutive interaction with calmodulin which binds the intracellular calcium allowing its opening. The current is characterized by a voltage-independent activation, an intracellular calcium concentration increase-dependent activation and a single-channel conductance of about 3 picosiemens. Also presents an inwardly rectifying current, thus reducing its already small outward conductance of potassium ions, which is particularly the case when the membrane potential displays positive values, above + 20 mV. The inward rectification could be due to a blockade of the outward current by intracellular divalent cations such as calcium and magnesium and could also be due to an intrinsic property of the channel pore, independent of intracellular divalent ions. There are three positively charged amino acids in the S6 transmembrane domain, close to the pore, that collectively control the conductance and rectification through an electrostatic mechanism. Additionally, electrostatic contributions from these residues also play an important role in determining the intrinsic open probability of the channel in the absence of calcium, affecting the apparent calcium affinity for activation. Forms an heteromeric complex with calmodulin, which is constitutively associated in a calcium-independent manner. Channel opening is triggered when calcium binds the calmodulin resulting in a rotary movement leading to the formation of the dimeric complex to open the gate. Plays a role in the repolarization phase of cardiac action potential. This Rattus norvegicus (Rat) protein is Small conductance calcium-activated potassium channel protein 2.